A 458-amino-acid chain; its full sequence is ATP synthase subunit beta 2 (458 aa).

G148 to T155 contacts ATP.

The protein belongs to the ATPase alpha/beta chains family. In terms of assembly, F-type ATPases have 2 components, CF(1) - the catalytic core - and CF(0) - the membrane proton channel. CF(1) has five subunits: alpha(3), beta(3), gamma(1), delta(1), epsilon(1). CF(0) has three main subunits: a(1), b(2) and c(9-12). The alpha and beta chains form an alternating ring which encloses part of the gamma chain. CF(1) is attached to CF(0) by a central stalk formed by the gamma and epsilon chains, while a peripheral stalk is formed by the delta and b chains.

The protein resides in the cell inner membrane. The enzyme catalyses ATP + H2O + 4 H(+)(in) = ADP + phosphate + 5 H(+)(out). Produces ATP from ADP in the presence of a proton gradient across the membrane. The catalytic sites are hosted primarily by the beta subunits. The protein is ATP synthase subunit beta 2 of Marinomonas sp. (strain MWYL1).